Reading from the N-terminus, the 256-residue chain is MQWQDHAIILGVKRHGETSVIAEVMTRDRGRHLGLVRSGRSRAMQPVLQAGNAVEVIWRARLDEHLGEFRVEPVTLRAARLMETATAVYGVQAMGALLRLLPERDPHPHLFDALEVILDHLHNPADAGELFVRFELAVLNDLGFGLDLAECAATGARSDLAYVSPKSGRAVSRSAGAPWADKMLLLPPFLGIEGNHAADFDSLSAAFRLTGFFLHRHVYEPRGIEAAAARDGFVQAALKALNPALRTLSGPNDISA.

This sequence belongs to the RecO family.

In terms of biological role, involved in DNA repair and RecF pathway recombination. The polypeptide is DNA repair protein RecO (Rhizobium leguminosarum bv. trifolii (strain WSM2304)).